The primary structure comprises 310 residues: Mas-related G-protein coupled receptor member E (310 aa).

The Extracellular segment spans residues 1 to 22; it reads MTSLSVHTDSPSTQGEMAFNLT. A glycan (N-linked (GlcNAc...) asparagine) is linked at Asn-20. A helical transmembrane segment spans residues 23-43; that stretch reads ILSLTELLSLGGLLGNGVALW. The Cytoplasmic segment spans residues 44–60; that stretch reads LLNQNVYRNPFSIYLLD. The helical transmembrane segment at 61–81 threads the bilayer; sequence VACADLIFLCCHMVAIIPELL. Residues 82–92 are Extracellular-facing; it reads QDQLNFPEFVH. Residues 93 to 113 traverse the membrane as a helical segment; that stretch reads ISLTMLRFFCYIVGLSLLAAI. The Cytoplasmic portion of the chain corresponds to 114-133; the sequence is STEQCLATLFPAWYLCRRPR. A helical membrane pass occupies residues 134–154; that stretch reads YLTTCVCALIWVLCLLLDLLL. The Extracellular portion of the chain corresponds to 155–174; the sequence is SGACTQFFGAPSYHLCDMLW. A helical transmembrane segment spans residues 175-195; that stretch reads LVVAVLLAALCCTMCVTSLLL. At 196 to 213 the chain is on the cytoplasmic side; that stretch reads LLRVERGPERHQPRGFPT. Residues 214-234 form a helical membrane-spanning segment; it reads LVLLAVLLFLFCGLPFGIFWL. The Extracellular segment spans residues 235–248; that stretch reads SKNLSWHIPLYFYH. Asn-237 carries an N-linked (GlcNAc...) asparagine glycan. A helical membrane pass occupies residues 249-269; sequence FSFFMASVHSAAKPAIYFFLG. Residues 270–310 lie on the Cytoplasmic side of the membrane; sequence STPGQRFREPLRLVLQRALGDEAELGAGREASQGGLVDMTV.

Belongs to the G-protein coupled receptor 1 family. Mas subfamily.

It is found in the cell membrane. Functionally, orphan receptor. May regulate nociceptor function and/or development, including the sensation or modulation of pain. In Mus musculus (Mouse), this protein is Mas-related G-protein coupled receptor member E (Mrgpre).